A 365-amino-acid polypeptide reads, in one-letter code: Galactoside alpha-(1,2)-fucosyltransferase 1 (365 aa).

Residues M1–Q8 are Cytoplasmic-facing. Residues L9–L25 traverse the membrane as a helical; Signal-anchor for type II membrane protein segment. At H26–P365 the chain is on the lumenal side. N65 and N327 each carry an N-linked (GlcNAc...) asparagine glycan.

This sequence belongs to the glycosyltransferase 11 family.

It localises to the golgi apparatus. The protein localises to the golgi stack membrane. It carries out the reaction a beta-D-galactosyl-(1-&gt;4)-N-acetyl-beta-D-glucosaminyl derivative + GDP-beta-L-fucose = an alpha-L-Fuc-(1-&gt;2)-beta-D-Gal-(1-&gt;4)-beta-D-GlcNAc derivative + GDP + H(+). The catalysed reaction is a ganglioside GA1 + GDP-beta-L-fucose = a ganglioside Fuc-GA1 + GDP + H(+). It catalyses the reaction a beta-D-Gal-(1-&gt;3)-beta-D-GlcNAc-(1-&gt;3)-beta-D-Gal-(1-&gt;4)-beta-D-Glc-(1&lt;-&gt;1')-Cer(d18:1(4E)) + GDP-beta-L-fucose = alpha-L-fucosyl-(1-&gt;2)- beta-D-galactosyl-(1-&gt;3)-N-acetyl-beta-D-glucosaminyl-(1-&gt;3)-beta-D-galactosyl-(1-&gt;4)-beta-D-glucosyl-(1&lt;-&gt;1')-N-acylsphing-4-enine + GDP + H(+). The enzyme catalyses a neolactoside nLc4Cer(d18:1(4E)) + GDP-beta-L-fucose = a neolactoside IV(2)-alpha-Fuc-nLc4Cer(d18:1(4E)) + GDP + H(+). It carries out the reaction a ganglioside GM1 + GDP-beta-L-fucose = a ganglioside Fuc-GM1 + GDP + H(+). The catalysed reaction is beta-D-galactosyl-(1-&gt;3)-N-acetyl-D-galactosamine + GDP-beta-L-fucose = alpha-L-fucosyl-(1-&gt;2)-beta-D-galactosyl-(1-&gt;3)-N-acetyl-D-galactosamine + GDP + H(+). It functions in the pathway protein modification; protein glycosylation. Catalyzes the transfer of L-fucose, from a guanosine diphosphate-beta-L-fucose, to the terminal galactose residue of glycoconjugates through an alpha(1,2) linkage leading to H antigen synthesis that is an intermediate substrate in the synthesis of ABO blood group antigens. H antigen is essential for maturation of the glomerular layer of the main olfactory bulb, in cell migration and early cell-cell contacts during tumor associated angiogenesis. Preferentially fucosylates soluble lactose and to a lesser extent fucosylates glycolipids gangliosides GA1 and GM1a. This chain is Galactoside alpha-(1,2)-fucosyltransferase 1, found in Homo sapiens (Human).